The chain runs to 266 residues: Protein-ADP-ribose hydrolase (266 aa).

The region spanning 74 to 265 (TDLKDLKPIK…LYKEAFNRDA (192 aa)) is the Macro domain. ADP-D-ribose is bound by residues Asp93, Ile94, and Asn107. Zn(2+) contacts are provided by Cys113, His118, and Cys120. Residues Cys120, Ile121, Asp122, Ser212, Thr213, Gly214, and Phe216 each contribute to the ADP-D-ribose site.

This sequence belongs to the MacroD-type family. Zn-Macro subfamily. Zn(2+) is required as a cofactor.

The catalysed reaction is 4-O-(ADP-D-ribosyl)-L-aspartyl-[protein] + H2O = L-aspartyl-[protein] + ADP-D-ribose + H(+). Functionally, ADP-ribosylhydrolase that specifically reverses the SirTM-mediated mono-ADP-ribosylation at an asparatate residue of GcvH-L, by releasing ADP-ribose from the target protein. May play a role in the regulation of the response to host-induced oxidative stress. This Staphylococcus aureus (strain MSSA476) protein is Protein-ADP-ribose hydrolase.